A 160-amino-acid polypeptide reads, in one-letter code: Small ribosomal subunit protein uS10m (160 aa).

Belongs to the universal ribosomal protein uS10 family. As to quaternary structure, component of the mitochondrial ribosome small subunit (28S) which comprises a 12S rRNA and about 30 distinct proteins.

Its subcellular location is the mitochondrion. This is Small ribosomal subunit protein uS10m (Mrps10) from Mus musculus (Mouse).